Reading from the N-terminus, the 325-residue chain is Elongation factor P--(R)-beta-lysine ligase (325 aa).

Residue 76-78 participates in substrate binding; the sequence is SPE. Residues 100–102 and Asn109 contribute to the ATP site; that span reads RNE. Tyr118 contacts substrate. 244-245 is a binding site for ATP; the sequence is EL. Glu251 provides a ligand contact to substrate. Gly300 provides a ligand contact to ATP.

This sequence belongs to the class-II aminoacyl-tRNA synthetase family. EpmA subfamily. As to quaternary structure, homodimer.

The enzyme catalyses D-beta-lysine + L-lysyl-[protein] + ATP = N(6)-((3R)-3,6-diaminohexanoyl)-L-lysyl-[protein] + AMP + diphosphate + H(+). Its function is as follows. With EpmB is involved in the beta-lysylation step of the post-translational modification of translation elongation factor P (EF-P) on 'Lys-34'. Catalyzes the ATP-dependent activation of (R)-beta-lysine produced by EpmB, forming a lysyl-adenylate, from which the beta-lysyl moiety is then transferred to the epsilon-amino group of EF-P 'Lys-34'. The polypeptide is Elongation factor P--(R)-beta-lysine ligase (Escherichia fergusonii (strain ATCC 35469 / DSM 13698 / CCUG 18766 / IAM 14443 / JCM 21226 / LMG 7866 / NBRC 102419 / NCTC 12128 / CDC 0568-73)).